The sequence spans 241 residues: Probable transcriptional regulatory protein Mpe_A1337 (241 aa).

Residues 1–20 (MAGHSKWANIQHRKGRQDEK) are disordered.

Belongs to the TACO1 family.

The protein localises to the cytoplasm. This is Probable transcriptional regulatory protein Mpe_A1337 from Methylibium petroleiphilum (strain ATCC BAA-1232 / LMG 22953 / PM1).